Consider the following 305-residue polypeptide: ATP synthase gamma chain (305 aa).

Belongs to the ATPase gamma chain family. F-type ATPases have 2 components, CF(1) - the catalytic core - and CF(0) - the membrane proton channel. CF(1) has five subunits: alpha(3), beta(3), gamma(1), delta(1), epsilon(1). CF(0) has three main subunits: a, b and c.

Its subcellular location is the cell membrane. Functionally, produces ATP from ADP in the presence of a proton gradient across the membrane. The gamma chain is believed to be important in regulating ATPase activity and the flow of protons through the CF(0) complex. In Streptomyces coelicolor (strain ATCC BAA-471 / A3(2) / M145), this protein is ATP synthase gamma chain.